Consider the following 540-residue polypeptide: Phenylalanine--tRNA ligase beta subunit (540 aa).

The region spanning 268–343 is the B5 domain; it reads LQHKSIKITA…ITYGYNNLSP (76 aa). Mg(2+) is bound by residues aspartate 321, aspartate 327, glutamate 330, and glutamate 331.

The protein belongs to the phenylalanyl-tRNA synthetase beta subunit family. Type 2 subfamily. As to quaternary structure, tetramer of two alpha and two beta subunits. The cofactor is Mg(2+).

Its subcellular location is the cytoplasm. It carries out the reaction tRNA(Phe) + L-phenylalanine + ATP = L-phenylalanyl-tRNA(Phe) + AMP + diphosphate + H(+). This Sulfurisphaera tokodaii (strain DSM 16993 / JCM 10545 / NBRC 100140 / 7) (Sulfolobus tokodaii) protein is Phenylalanine--tRNA ligase beta subunit.